The chain runs to 631 residues: MAAAAGDGTVKPLQSAMKLANGAIELDTGNRPREAYTEYLRSIHYISQVLLEEVETTKEAGETVPPDTSKMLKLAQQCLERAQSTAAKLGKTRLKPTMPAAAPIPQPAGRHRRVYSDEGGKLSPFLPPEIFQKLQGAESQSCKKELTPLEEASLQNQKLKAAYEARMARLDPSQAMQKTSLTLSLQRQMMENLVIAKAREETLQRKMEERRLRLQEAANRRFCSQVALTPEEREQRALYAAILEYEQDHDWPKHWKAKLKRNPGDLSLVTSLVSHLLSLPDHPIAQLLRRLQCSVYSALYPAVSRAAAPAPGCCPPTPNPGSRRLRPSQSLHCMLSPPEPSAAPRPQDSPPTPPLQPGPVGSPSPLGDTASGLPDKDSSFEDLEQFLGTSERQGRGRGVQPEPQLQQLKTAVEEIHNAVDRLLSLTLLAFEGLNTAASKDRCLACIEEPFFSPLWPLLLALYRSVHRAREAALSRSMELYRNAPPTAIGIPTKLLPQNPEAKGATGYPYCAAAQELGLLVLESCPQKKLECIVRTLRIICVCAEDYCPTPEATPQAGPPPIAAAAIGADDLLPILSFVVLRSGLPQLVSECAALEEFIHEGYLIGEEGYCLTSLQSALSYVELLPRGGLAK.

Residue Ser-116 is modified to Phosphoserine. Positions Arg-187–Arg-221 form a coiled coil. A disordered region spans residues Pro-318–Ser-379. Residues Pro-337 to Ser-362 are compositionally biased toward pro residues. The region spanning Arg-467–Ala-630 is the VPS9 domain.

In terms of tissue distribution, ubiquitous.

This Homo sapiens (Human) protein is VPS9 domain-containing protein 1 (VPS9D1).